A 38-amino-acid chain; its full sequence is Photosystem II reaction center protein L (38 aa).

The chain crosses the membrane as a helical span at residues 17 to 37 (SLYWGLLLIFVLAVPFSNYFF).

The protein belongs to the PsbL family. PSII is composed of 1 copy each of membrane proteins PsbA, PsbB, PsbC, PsbD, PsbE, PsbF, PsbH, PsbI, PsbJ, PsbK, PsbL, PsbM, PsbT, PsbX, PsbY, PsbZ, Psb30/Ycf12, at least 3 peripheral proteins of the oxygen-evolving complex and a large number of cofactors. It forms dimeric complexes.

Its subcellular location is the plastid. It localises to the chloroplast thylakoid membrane. Its function is as follows. One of the components of the core complex of photosystem II (PSII). PSII is a light-driven water:plastoquinone oxidoreductase that uses light energy to abstract electrons from H(2)O, generating O(2) and a proton gradient subsequently used for ATP formation. It consists of a core antenna complex that captures photons, and an electron transfer chain that converts photonic excitation into a charge separation. This subunit is found at the monomer-monomer interface and is required for correct PSII assembly and/or dimerization. The polypeptide is Photosystem II reaction center protein L (Cedrus deodara (Deodar cedar)).